The primary structure comprises 381 residues: Periphilin-1 (381 aa).

Composition is skewed to basic and acidic residues over residues 1-28 (MWSEGRYDYDRLPRERVPPRSHPSDGYH), 39-65 (PLLDKRPPLLDKRPPLLARPDEGGYSR), and 79-121 (RSFS…DGFR). 2 disordered regions span residues 1 to 65 (MWSE…GYSR) and 79 to 260 (RSFS…KSDE). Positions 117-123 (RDGFRRK) match the Nuclear localization signal motif. A Glycyl lysine isopeptide (Lys-Gly) (interchain with G-Cter in SUMO2) cross-link involves residue lysine 123. Residues serine 124, serine 128, serine 147, and serine 154 each carry the phosphoserine modification. A compositionally biased stretch (basic and acidic residues) spans 130–156 (YSRDRSPHKRDAPFFRESPVGRKDSPH). The segment covering 157-168 (SRSGSSVSSRSY) has biased composition (low complexity). Positions 175–187 (THSFHQSQHRKSS) are enriched in basic residues. Serine 181 bears the Phosphoserine mark. A Glycyl lysine isopeptide (Lys-Gly) (interchain with G-Cter in SUMO2) cross-link involves residue lysine 194. Positions 195-208 (RQNEAIRGRGKERS) are enriched in basic and acidic residues. Serine 211 is subject to Phosphoserine. A Glycyl lysine isopeptide (Lys-Gly) (interchain with G-Cter in SUMO2) cross-link involves residue lysine 213. A phosphoserine mark is found at serine 215 and serine 219. Positions 217–230 (DASPSSSSAVASSK) are enriched in low complexity. Over residues 231–260 (ALDKPSRLTEKELAEAESKWANETLEKSDE) the composition is skewed to basic and acidic residues. Residue lysine 241 forms a Glycyl lysine isopeptide (Lys-Gly) (interchain with G-Cter in SUMO2) linkage. An N6-acetyllysine; alternate modification is found at lysine 249. A Glycyl lysine isopeptide (Lys-Gly) (interchain with G-Cter in SUMO2); alternate cross-link involves residue lysine 249. Serine 339 is modified (phosphoserine). Lysine 342 participates in a covalent cross-link: Glycyl lysine isopeptide (Lys-Gly) (interchain with G-Cter in SUMO2).

In terms of assembly, homodimer. Component of the HUSH complex; at least composed of TASOR, PPHLN1 and MPHOSPH8. Interacts with SIN3A and HDAC1. May interact with PPL. Ubiquitously expressed. Strong expression in the developing somites and limbs, the embryonic nervous system and the adult brain.

It localises to the nucleus. The protein localises to the cytoplasm. The protein resides in the chromosome. In terms of biological role, component of the HUSH complex, a multiprotein complex that mediates epigenetic repression. The HUSH complex is recruited to genomic loci rich in H3K9me3 and is probably required to maintain transcriptional silencing by promoting recruitment of SETDB1, a histone methyltransferase that mediates further deposition of H3K9me3. In the HUSH complex, contributes to the maintenance of the complex at chromatin. Acts as a transcriptional corepressor and regulates the cell cycle, probably via the HUSH complex. The HUSH complex is also involved in the silencing of unintegrated retroviral DNA: some part of the retroviral DNA formed immediately after infection remains unintegrated in the host genome and is transcriptionally repressed. May be involved in epithelial differentiation by contributing to epidermal integrity and barrier formation. The protein is Periphilin-1 of Mus musculus (Mouse).